The primary structure comprises 225 residues: Receptor-transporting protein 2 (225 aa).

Residues 1–196 (MCTSLTTCEW…RAQAGSGYNF (196 aa)) are Cytoplasmic-facing. A 3CxxC-type zinc finger spans residues 52 to 161 (ASGRFHCSWC…AEFCEACQEG (110 aa)). A helical membrane pass occupies residues 197–219 (LSLRWCLFWASLCLLVVYLQFSF). At 220-225 (LSPAFF) the chain is on the extracellular side.

Belongs to the TMEM7 family. In terms of assembly, interacts with olfactory receptors. In terms of tissue distribution, expressed in circumvallate papillae and testis.

The protein localises to the cell membrane. Its function is as follows. Specifically promotes functional cell surface expression of olfactory receptors, but not of other GPCRs. This is Receptor-transporting protein 2 (RTP2) from Homo sapiens (Human).